Reading from the N-terminus, the 223-residue chain is Putative synaptogyrin-2 like protein (223 aa).

An N-acetylmethionine modification is found at Met-1. Phosphoserine is present on Ser-3. The region spanning 20–170 (FLTQPQVVAR…LASLTYQRYK (151 aa)) is the MARVEL domain. Helical transmembrane passes span 26–46 (VVARALCLVFALIVFSCIYGE), 71–91 (GSAIGVLAFLASAFLVVDAYF), 104–124 (VIGDLLFSALWTFLWFVGFCF), and 146–166 (AAITFSFFSIFSWGVLASLTY). Positions 197 to 223 (ASVDNYQQPPFTQNAETTEGYQPPPVY) are disordered. The span at 200-216 (DNYQQPPFTQNAETTEG) shows a compositional bias: polar residues.

This sequence belongs to the synaptogyrin family.

Its subcellular location is the membrane. The protein is Putative synaptogyrin-2 like protein of Homo sapiens (Human).